We begin with the raw amino-acid sequence, 351 residues long: High-affinity nickel transport protein (351 aa).

Residues 1–19 (MFQLLAGVRMNSTGRPRAK) are Cytoplasmic-facing. The chain crosses the membrane as a helical span at residues 20–40 (IILLYALLIAFNIGAWLCALA). Topologically, residues 41-51 (AFRDHPVLLGT) are periplasmic. The helical transmembrane segment at 52–72 (ALLAYGLGLRHAVDADHLAAI) threads the bilayer. Residues 73–94 (DNVTRKLMQDGRRPITAGLWFS) lie on the Cytoplasmic side of the membrane. A helical transmembrane segment spans residues 95–115 (LGHSSVVVLASVLIAVMATTL). Topologically, residues 116-128 (QERLDAFHEVGSV) are periplasmic. The helical transmembrane segment at 129–149 (IGTLASALFLFAIAAINLVIL) threads the bilayer. At 150–199 (RSAYRAFRRVRRGGIYVEEDFDLLFGNRGFLARIFRPLFRFITRSWHMYP) the chain is on the cytoplasmic side. The helical transmembrane segment at 200 to 220 (LGMLFALGFDTATEVALLGIS) threads the bilayer. Residues 221–243 (TMEASRGVPIWSILVFPALFTAG) lie on the Periplasmic side of the membrane. A helical membrane pass occupies residues 244-264 (MALIDTIDSILMCGAYAWAYA). Residues 265 to 269 (KPVRK) are Cytoplasmic-facing. The helical transmembrane segment at 270–290 (LYYNMTITFVSAIVALIVGGI) threads the bilayer. Residues 291 to 316 (ETLGLLADKFMLKGVFWNAVGALNEN) lie on the Periplasmic side of the membrane. A helical membrane pass occupies residues 317 to 337 (FCQLGFVIIGIFTVCWVVSIV). Over 338–351 (VYRLRRYDDSEVRA) the chain is Cytoplasmic.

The protein belongs to the NiCoT transporter (TC 2.A.52) family.

It localises to the cell inner membrane. High-affinity nickel transporter responsible for nickel uptake. Necessary for high levels of activity of hydrogenase and urease. Does not transport cobalt. This Cupriavidus necator (strain ATCC 17699 / DSM 428 / KCTC 22496 / NCIMB 10442 / H16 / Stanier 337) (Ralstonia eutropha) protein is High-affinity nickel transport protein (hoxN).